Reading from the N-terminus, the 539-residue chain is Probable 1,4-beta-D-glucan cellobiohydrolase B (539 aa).

An N-terminal signal peptide occupies residues 1–26 (MLPSTISYRIYKNALFFAALFGAVQA). Positions 27–461 (QKVGTSKAEV…SNIKVGPIGS (435 aa)) are catalytic. Asparagine 90 carries N-linked (GlcNAc...) asparagine glycosylation. The active-site Nucleophile is glutamate 238. Residue glutamate 243 is the Proton donor of the active site. Asparagine 296 and asparagine 495 each carry an N-linked (GlcNAc...) asparagine glycan. The tract at residues 462-503 (TFNSGGSNPGGSTTTTKPATSTTTTKATTTATTNTTGPTGTG) is thr-rich linker. Residues 462–503 (TFNSGGSNPGGSTTTTKPATSTTTTKATTTATTNTTGPTGTG) are compositionally biased toward low complexity. The interval 462–504 (TFNSGGSNPGGSTTTTKPATSTTTTKATTTATTNTTGPTGTGV) is disordered. The region spanning 503-539 (GVAQPWAQCGGIGYSGPTQCAAPYTCTKQNDYYSQCL) is the CBM1 domain. 2 disulfide bridges follow: cysteine 511–cysteine 528 and cysteine 522–cysteine 538.

Belongs to the glycosyl hydrolase 7 (cellulase C) family.

The protein resides in the secreted. The enzyme catalyses Hydrolysis of (1-&gt;4)-beta-D-glucosidic linkages in cellulose and cellotetraose, releasing cellobiose from the non-reducing ends of the chains.. In terms of biological role, the biological conversion of cellulose to glucose generally requires three types of hydrolytic enzymes: (1) Endoglucanases which cut internal beta-1,4-glucosidic bonds; (2) Exocellobiohydrolases that cut the disaccharide cellobiose from the non-reducing end of the cellulose polymer chain; (3) Beta-1,4-glucosidases which hydrolyze the cellobiose and other short cello-oligosaccharides to glucose. In Aspergillus clavatus (strain ATCC 1007 / CBS 513.65 / DSM 816 / NCTC 3887 / NRRL 1 / QM 1276 / 107), this protein is Probable 1,4-beta-D-glucan cellobiohydrolase B (cbhB).